The chain runs to 187 residues: dTTP/UTP pyrophosphatase (187 aa).

The Proton acceptor role is filled by Asp68.

This sequence belongs to the Maf family. YhdE subfamily. A divalent metal cation serves as cofactor.

The protein resides in the cytoplasm. It carries out the reaction dTTP + H2O = dTMP + diphosphate + H(+). The catalysed reaction is UTP + H2O = UMP + diphosphate + H(+). Nucleoside triphosphate pyrophosphatase that hydrolyzes dTTP and UTP. May have a dual role in cell division arrest and in preventing the incorporation of modified nucleotides into cellular nucleic acids. This Thermus thermophilus (strain ATCC BAA-163 / DSM 7039 / HB27) protein is dTTP/UTP pyrophosphatase.